A 473-amino-acid chain; its full sequence is Serine carboxypeptidase-like 42 (473 aa).

A signal peptide spans 1-26 (MASVSWRAVAVAMVVVLLSLQWFAKG). 3 cysteine pairs are disulfide-bonded: cysteine 87–cysteine 346, cysteine 247–cysteine 264, and cysteine 289–cysteine 314. An N-linked (GlcNAc...) asparagine glycan is attached at asparagine 138. The active site involves serine 179. Asparagine 259 carries an N-linked (GlcNAc...) asparagine glycan. 2 N-linked (GlcNAc...) asparagine glycosylation sites follow: asparagine 335 and asparagine 351. Catalysis depends on residues aspartate 383 and histidine 440. Residue asparagine 465 is glycosylated (N-linked (GlcNAc...) asparagine).

The protein belongs to the peptidase S10 family. Expression not detected.

It is found in the secreted. Probable carboxypeptidase. The protein is Serine carboxypeptidase-like 42 (SCPL42) of Arabidopsis thaliana (Mouse-ear cress).